The sequence spans 281 residues: MEMO1 family protein APE_1771 (281 aa).

The protein belongs to the MEMO1 family.

This Aeropyrum pernix (strain ATCC 700893 / DSM 11879 / JCM 9820 / NBRC 100138 / K1) protein is MEMO1 family protein APE_1771.